A 140-amino-acid polypeptide reads, in one-letter code: Putative pre-16S rRNA nuclease (140 aa).

Belongs to the YqgF nuclease family.

The protein localises to the cytoplasm. Its function is as follows. Could be a nuclease involved in processing of the 5'-end of pre-16S rRNA. This chain is Putative pre-16S rRNA nuclease, found in Mannheimia succiniciproducens (strain KCTC 0769BP / MBEL55E).